We begin with the raw amino-acid sequence, 152 residues long: Nucleoside diphosphate kinase (152 aa).

Residues lysine 12, phenylalanine 60, arginine 88, threonine 94, arginine 105, and asparagine 115 each coordinate ATP. Histidine 118 serves as the catalytic Pros-phosphohistidine intermediate.

This sequence belongs to the NDK family. As to quaternary structure, homotrimer. It depends on Mg(2+) as a cofactor.

The catalysed reaction is a 2'-deoxyribonucleoside 5'-diphosphate + ATP = a 2'-deoxyribonucleoside 5'-triphosphate + ADP. It catalyses the reaction a ribonucleoside 5'-diphosphate + ATP = a ribonucleoside 5'-triphosphate + ADP. Functionally, major role in the synthesis of nucleoside triphosphates other than ATP. The ATP gamma phosphate is transferred to the NDP beta phosphate via a ping-pong mechanism, using a phosphorylated active-site intermediate. The polypeptide is Nucleoside diphosphate kinase (ndk-1) (Neurospora crassa (strain ATCC 24698 / 74-OR23-1A / CBS 708.71 / DSM 1257 / FGSC 987)).